The chain runs to 486 residues: Keratin, type II cuticular Hb6 (486 aa).

A head region spans residues 1 to 106 (MTCGSYCGGR…PNAQCVKHEE (106 aa)). Residues 106 to 417 (EKEQIKCLNS…RLLEGEEQRL (312 aa)) form the IF rod domain. Positions 107–141 (KEQIKCLNSKFAAFIDKVRFLEQQNKLLETKWQFY) are coil 1A. Residues 142–151 (QNRKCCESNM) are linker 1. The segment at 152 to 252 (EPLFEGYIEA…YDEETRILHS (101 aa)) is coil 1B. K212 is covalently cross-linked (Glycyl lysine isopeptide (Lys-Gly) (interchain with G-Cter in SUMO1)). Positions 253 to 269 (HISDTSIVVKMDNSRDL) are linker 12. A coil 2 region spans residues 270–413 (NMDCVVAEIK…TTYRRLLEGE (144 aa)). Residues 414–486 (EQRLCEGVGS…GACSGGCKKC (73 aa)) are tail.

Belongs to the intermediate filament family. As to quaternary structure, heterotetramer of two type I and two type II keratins.

The sequence is that of Keratin, type II cuticular Hb6 (Krt86) from Mus musculus (Mouse).